The chain runs to 680 residues: Structure-specific endonuclease subunit SLX4 (680 aa).

3 disordered regions span residues 15–92 (EVAK…EPVV), 141–183 (ESSS…STQQ), and 450–490 (LGSG…ATRL). The span at 22–33 (DSDEPIIDEDDL) shows a compositional bias: acidic residues. A compositionally biased stretch (basic and acidic residues) spans 60-86 (NNSKDTFKETPLELVDKEEAIEDKAPN). Basic residues predominate over residues 156–174 (LKSKKITKPKLTKTSKRTK). The span at 473-490 (TVISRSPQSTRTPQATRL) shows a compositional bias: polar residues.

The protein belongs to the SLX4 family. Forms a heterodimer with SLX1. Post-translationally, phosphorylated in response to DNA damage.

It localises to the nucleus. In terms of biological role, regulatory subunit of the SLX1-SLX4 structure-specific endonuclease that resolves DNA secondary structures generated during DNA repair and recombination. Has endonuclease activity towards branched DNA substrates, introducing single-strand cuts in duplex DNA close to junctions with ss-DNA. The sequence is that of Structure-specific endonuclease subunit SLX4 from Vanderwaltozyma polyspora (strain ATCC 22028 / DSM 70294 / BCRC 21397 / CBS 2163 / NBRC 10782 / NRRL Y-8283 / UCD 57-17) (Kluyveromyces polysporus).